The sequence spans 714 residues: Structure-specific endonuclease subunit SLX4 1 (714 aa).

Composition is skewed to basic and acidic residues over residues 1 to 14 and 24 to 34; these read MSPEGEESHAEDNL and IHEETLAEESH. Disordered stretches follow at residues 1–116 and 337–369; these read MSPE…QGSI and DSSGPVNDKQPSVASETVESDSTPIVSPVKTPQ. Over residues 36 to 46 the composition is skewed to low complexity; sequence QSIQRSISRLS. Over residues 79–92 the composition is skewed to basic residues; it reads KTKKRKLKVSKPRK.

The protein belongs to the SLX4 family. In terms of assembly, forms a heterodimer with SLX1. Phosphorylated in response to DNA damage.

The protein localises to the nucleus. Regulatory subunit of the SLX1-SLX4 structure-specific endonuclease that resolves DNA secondary structures generated during DNA repair and recombination. Has endonuclease activity towards branched DNA substrates, introducing single-strand cuts in duplex DNA close to junctions with ss-DNA. In Candida tropicalis (strain ATCC MYA-3404 / T1) (Yeast), this protein is Structure-specific endonuclease subunit SLX4 1.